Consider the following 263-residue polypeptide: RNA exonuclease 4 (263 aa).

The segment at 1 to 27 (MRLSSNWSKLQDGVTKKAGKKRIDKKP) is disordered. Residues 17-27 (KAGKKRIDKKP) show a composition bias toward basic residues. Residues 95–247 (YIAMDCEFVG…EDARATMLIY (153 aa)) form the Exonuclease domain.

It belongs to the REXO4 family.

The protein localises to the nucleus. Exoribonuclease involved in ribosome biosynthesis. Involved in the processing of ITS1, the internal transcribed spacer localized between the 18S and 5.8S rRNAs. The sequence is that of RNA exonuclease 4 (REX4) from Candida glabrata (strain ATCC 2001 / BCRC 20586 / JCM 3761 / NBRC 0622 / NRRL Y-65 / CBS 138) (Yeast).